Here is a 631-residue protein sequence, read N- to C-terminus: Phosphomethylpyrimidine synthase (631 aa).

Substrate contacts are provided by residues asparagine 231, methionine 260, tyrosine 289, histidine 325, serine 345 to glycine 347, aspartate 386 to arginine 389, and glutamate 425. A Zn(2+)-binding site is contributed by histidine 429. Position 452 (tyrosine 452) interacts with substrate. Histidine 493 is a Zn(2+) binding site. The [4Fe-4S] cluster site is built by cysteine 573, cysteine 576, and cysteine 581.

The protein belongs to the ThiC family. Homodimer. [4Fe-4S] cluster serves as cofactor.

The enzyme catalyses 5-amino-1-(5-phospho-beta-D-ribosyl)imidazole + S-adenosyl-L-methionine = 4-amino-2-methyl-5-(phosphooxymethyl)pyrimidine + CO + 5'-deoxyadenosine + formate + L-methionine + 3 H(+). It participates in cofactor biosynthesis; thiamine diphosphate biosynthesis. Catalyzes the synthesis of the hydroxymethylpyrimidine phosphate (HMP-P) moiety of thiamine from aminoimidazole ribotide (AIR) in a radical S-adenosyl-L-methionine (SAM)-dependent reaction. The sequence is that of Phosphomethylpyrimidine synthase from Acinetobacter baylyi (strain ATCC 33305 / BD413 / ADP1).